A 267-amino-acid chain; its full sequence is Hydroxynaphthalene reductase-like protein Arp2 (267 aa).

The NADP(+) site is built by isoleucine 25, asparagine 45, aspartate 71, and asparagine 98. Residues serine 147 and serine 148 each act as proton donor in the active site. Tyrosine 162, lysine 166, valine 195, and threonine 197 together coordinate NADP(+). Tyrosine 162 serves as the catalytic Proton acceptor. The active-site Lowers pKa of active site Tyr is the lysine 166.

The protein belongs to the short-chain dehydrogenases/reductases (SDR) family.

Functionally, hydroxynaphthalene reductase-like protein; part of the Pks2 gene cluster that mediates the formation of infectious structures (appressoria), enabling these fungi to kill insects faster. The product of the Pks2 gene cluster is different from the one of Pks1 and has still not been identified. This is Hydroxynaphthalene reductase-like protein Arp2 from Metarhizium anisopliae (strain ARSEF 549).